A 292-amino-acid chain; its full sequence is Acetylglutamate kinase (292 aa).

Substrate-binding positions include Gly-64–Gly-65, Arg-86, and Asn-190.

This sequence belongs to the acetylglutamate kinase family. ArgB subfamily.

Its subcellular location is the cytoplasm. It carries out the reaction N-acetyl-L-glutamate + ATP = N-acetyl-L-glutamyl 5-phosphate + ADP. It participates in amino-acid biosynthesis; L-arginine biosynthesis; N(2)-acetyl-L-ornithine from L-glutamate: step 2/4. In terms of biological role, catalyzes the ATP-dependent phosphorylation of N-acetyl-L-glutamate. The chain is Acetylglutamate kinase from Geobacter sp. (strain M21).